The chain runs to 233 residues: Biosynthetic peptidoglycan transglycosylase (233 aa).

A helical transmembrane segment spans residues 8–28 (LIALPVGIFIFFNAYVYGNII).

Belongs to the glycosyltransferase 51 family.

It is found in the cell inner membrane. It catalyses the reaction [GlcNAc-(1-&gt;4)-Mur2Ac(oyl-L-Ala-gamma-D-Glu-L-Lys-D-Ala-D-Ala)](n)-di-trans,octa-cis-undecaprenyl diphosphate + beta-D-GlcNAc-(1-&gt;4)-Mur2Ac(oyl-L-Ala-gamma-D-Glu-L-Lys-D-Ala-D-Ala)-di-trans,octa-cis-undecaprenyl diphosphate = [GlcNAc-(1-&gt;4)-Mur2Ac(oyl-L-Ala-gamma-D-Glu-L-Lys-D-Ala-D-Ala)](n+1)-di-trans,octa-cis-undecaprenyl diphosphate + di-trans,octa-cis-undecaprenyl diphosphate + H(+). It functions in the pathway cell wall biogenesis; peptidoglycan biosynthesis. Peptidoglycan polymerase that catalyzes glycan chain elongation from lipid-linked precursors. The protein is Biosynthetic peptidoglycan transglycosylase of Neisseria meningitidis serogroup A / serotype 4A (strain DSM 15465 / Z2491).